An 80-amino-acid chain; its full sequence is Putative membrane protein insertion efficiency factor (80 aa).

Residues 61-80 (KTGKDPVPDHFSLKRNQEGE) are disordered. Residues 62–80 (TGKDPVPDHFSLKRNQEGE) show a composition bias toward basic and acidic residues.

It belongs to the UPF0161 family.

The protein localises to the cell membrane. In terms of biological role, could be involved in insertion of integral membrane proteins into the membrane. The polypeptide is Putative membrane protein insertion efficiency factor (Streptococcus pneumoniae serotype 2 (strain D39 / NCTC 7466)).